A 201-amino-acid chain; its full sequence is Large ribosomal subunit protein uL4 (201 aa).

The interval 44 to 73 is disordered; sequence RAQKSRAEVKASRKKPWRQKGTGRARAGSV. Over residues 55–66 the composition is skewed to basic residues; sequence SRKKPWRQKGTG.

The protein belongs to the universal ribosomal protein uL4 family. In terms of assembly, part of the 50S ribosomal subunit.

Functionally, one of the primary rRNA binding proteins, this protein initially binds near the 5'-end of the 23S rRNA. It is important during the early stages of 50S assembly. It makes multiple contacts with different domains of the 23S rRNA in the assembled 50S subunit and ribosome. Forms part of the polypeptide exit tunnel. This chain is Large ribosomal subunit protein uL4, found in Hamiltonella defensa subsp. Acyrthosiphon pisum (strain 5AT).